Reading from the N-terminus, the 245-residue chain is Protein virB1 (245 aa).

Positions 1–28 (MLKATGPLSIILLASTCPSSGAAPLSFA) are cleaved as a signal peptide. Residues 176–245 (LVPPLTARPK…LFDLNQGGPQ (70 aa)) are disordered. Residues 183-193 (RPKDDREKPGS) show a composition bias toward basic and acidic residues.

This sequence belongs to the virb1 family.

Functionally, virB proteins are suggested to act at the bacterial surface and there play an important role in directing T-DNA transfer to plant cells. This chain is Protein virB1 (virB1), found in Agrobacterium fabrum (strain C58 / ATCC 33970) (Agrobacterium tumefaciens (strain C58)).